The primary structure comprises 367 residues: MSISSKIRPTPRKPSRMATDHSFKMKKFYADPFAISSISLAIVSWVIAIGGSISSASTNESFPRFTWWGIVYQFLIICSLMLFYCFDLVDHYRIFITTSIAVAFVYNTNSATNLVYADGPKKAAASAGVILLSIINLIWILYYGGDNASPTNRWIDSFSIKGIRPSPLENSLHRARRRGNRNTTPYQNNVYNDAIRDSGYATQFDGYPQQQPSHTNYVSSTALAGFENTQPNTSEAVNLHLNTLQQRINSASNAKETNDNSNNQTNTNIGNTFDTDFSNGNTETTMGDTLGLYSDIGDDNFIYKAKALYPYDADDDDAYEISFEQNEILQVSDIEGRWWKARRANGETGIIPSNYVQLIDGPEEMHR.

The Cytoplasmic portion of the chain corresponds to 1–32 (MSISSKIRPTPRKPSRMATDHSFKMKKFYADP). Residues 33–53 (FAISSISLAIVSWVIAIGGSI) traverse the membrane as a helical segment. Residues 54-65 (SSASTNESFPRF) are Extracellular-facing. N59 carries an N-linked (GlcNAc...) asparagine glycan. Residues 66 to 86 (TWWGIVYQFLIICSLMLFYCF) traverse the membrane as a helical segment. Residues 87 to 93 (DLVDHYR) lie on the Cytoplasmic side of the membrane. A helical transmembrane segment spans residues 94–114 (IFITTSIAVAFVYNTNSATNL). Over 115 to 122 (VYADGPKK) the chain is Extracellular. Residues 123–143 (AAASAGVILLSIINLIWILYY) traverse the membrane as a helical segment. Topologically, residues 144–367 (GGDNASPTNR…LIDGPEEMHR (224 aa)) are cytoplasmic. S166 carries the post-translational modification Phosphoserine. Residues 252 to 276 (SNAKETNDNSNNQTNTNIGNTFDTD) are disordered. Positions 259 to 272 (DNSNNQTNTNIGNT) are enriched in low complexity. The 62-residue stretch at 300 to 361 (NFIYKAKALY…PSNYVQLIDG (62 aa)) folds into the SH3 domain.

The protein belongs to the SHO1 family. Forms homooligomers. Interacts (via the SH3 domain) with PBS2. Interacts with FUS1, STE11, STE50 and RNA polymerase II.

It localises to the cell membrane. The protein resides in the bud. It is found in the bud neck. The protein localises to the cell projection. In terms of biological role, plasma membrane osmosensor that activates the high osmolarity glycerol (HOG) MAPK signaling pathway in response to high osmolarity. Detects changes in external osmolarity and activates PBS2 through the stimulation of STE11 and targets PBS2 to the plasma membrane. PBS2 activation leads to changes in glycerol production that helps to balance the intracellular and external osmotic pressures. Activates also HOG1 in response to heat stress and mediates resistance to oxidative stress. Involved in the regulation of the mating pathway. May be a receptor that feeds into the pseudohyphal growth pathway. This chain is High osmolarity signaling protein SHO1 (SHO1), found in Saccharomyces cerevisiae (strain ATCC 204508 / S288c) (Baker's yeast).